The chain runs to 130 residues: MSMQDPIADMLTRIRNGQAANKVSVSMPSAKLKVAIAQTLKEEGYITDYTVAGEAKPVLEITLKYFQGQPVVETIQRVSRPGLRIYKGKNDLPKVMGGLGVAIVSTSKGLMTDRAARQQGMGGEVICYVA.

This sequence belongs to the universal ribosomal protein uS8 family. Part of the 30S ribosomal subunit. Contacts proteins S5 and S12.

Its function is as follows. One of the primary rRNA binding proteins, it binds directly to 16S rRNA central domain where it helps coordinate assembly of the platform of the 30S subunit. The chain is Small ribosomal subunit protein uS8 from Shewanella loihica (strain ATCC BAA-1088 / PV-4).